A 32-amino-acid polypeptide reads, in one-letter code: MSDIN-like toxin proprotein a (32 aa).

The propeptide occupies 1–10; that stretch reads MSDINATRLP. The cyclopeptide (Ile-Pro) cross-link spans 11–18; the sequence is IIGILLPP. The propeptide occupies 19–32; sequence CIGDDVTLLLTRGE.

This sequence belongs to the MSDIN fungal toxin family. Processed by the macrocyclase-peptidase enzyme POPB to yield a toxic cyclic octapeptide. POPB first removes 10 residues from the N-terminus. Conformational trapping of the remaining peptide forces the enzyme to release this intermediate rather than proceed to macrocyclization. The enzyme rebinds the remaining peptide in a different conformation and catalyzes macrocyclization of the N-terminal 8 residues.

In terms of biological role, probable toxin that belongs to the MSDIN-like toxin family responsible for a large number of food poisoning cases and deaths. The sequence is that of MSDIN-like toxin proprotein a from Amanita phalloides (Death cap).